A 1394-amino-acid chain; its full sequence is DNA-directed RNA polymerase subunit beta'' (1394 aa).

Zn(2+) contacts are provided by cysteine 224, cysteine 295, cysteine 302, and cysteine 305.

This sequence belongs to the RNA polymerase beta' chain family. RpoC2 subfamily. In terms of assembly, in plastids the minimal PEP RNA polymerase catalytic core is composed of four subunits: alpha, beta, beta', and beta''. When a (nuclear-encoded) sigma factor is associated with the core the holoenzyme is formed, which can initiate transcription. Zn(2+) is required as a cofactor.

It is found in the plastid. Its subcellular location is the chloroplast. The catalysed reaction is RNA(n) + a ribonucleoside 5'-triphosphate = RNA(n+1) + diphosphate. In terms of biological role, DNA-dependent RNA polymerase catalyzes the transcription of DNA into RNA using the four ribonucleoside triphosphates as substrates. The polypeptide is DNA-directed RNA polymerase subunit beta'' (Cucumis sativus (Cucumber)).